The following is a 244-amino-acid chain: Venom nerve growth factor 1 (244 aa).

The first 18 residues, 1-18, serve as a signal peptide directing secretion; the sequence is MSMLCYTLIIAFLIGIWA. A propeptide spanning residues 19-125 is cleaved from the precursor; sequence APKSEDNVPL…TLNRNIRAKR (107 aa). The segment covering 47 to 66 has biased composition (basic and acidic residues); that stretch reads GLKTSRNTDQRHPAPKKAED. Residues 47–67 form a disordered region; sequence GLKTSRNTDQRHPAPKKAEDQ. 3 cysteine pairs are disulfide-bonded: cysteine 139-cysteine 205, cysteine 181-cysteine 233, and cysteine 193-cysteine 235.

This sequence belongs to the NGF-beta family. Homodimer; non-covalently linked. As to expression, expressed by the venom gland.

It localises to the secreted. Nerve growth factor is important for the development and maintenance of the sympathetic and sensory nervous systems. It stimulates division and differentiation of sympathetic and embryonic sensory neurons as well as basal forebrain cholinergic neurons in the brain. Its relevance in the snake venom is not clear. However, it has been shown to inhibit metalloproteinase-dependent proteolysis of platelet glycoprotein Ib alpha, suggesting a metalloproteinase inhibition to prevent metalloprotease autodigestion and/or protection against prey proteases. Binds a lipid between the two protein chains in the homodimer. The lipid-bound form promotes histamine relase from mouse mast cells, contrary to the lipid-free form. The chain is Venom nerve growth factor 1 from Notechis scutatus scutatus (Mainland tiger snake).